A 406-amino-acid chain; its full sequence is Exo-alpha-sialidase (406 aa).

The first 20 residues, 1–20 (MQSMRFMILALLVQFLPAWA), serve as a signal peptide directing secretion. Residues arginine 59, arginine 78, aspartate 84, and glutamine 148 each contribute to the substrate site. A glycan (N-linked (GlcNAc...) asparagine) is linked at asparagine 235. Substrate-binding positions include arginine 265, arginine 322, 322 to 323 (RR), 331 to 332 (YD), lysine 337, tyrosine 358, aspartate 376, and 376 to 378 (DFF). N-linked (GlcNAc...) asparagine glycosylation is present at asparagine 396.

Belongs to the glycosyl hydrolase 33 family.

It catalyses the reaction Hydrolysis of alpha-(2-&gt;3)-, alpha-(2-&gt;6)-, alpha-(2-&gt;8)- glycosidic linkages of terminal sialic acid residues in oligosaccharides, glycoproteins, glycolipids, colominic acid and synthetic substrates.. Sialidase is able to release sialic acid from a wide variety of natural substrates including bovine salivary mucin, colominic acid, bovine fetuin, a serum glycoprotein containing both alpha-2-6 and alpha-2-3-linkages in a ratio of about 3:2, and glycoproteins and glycolipids from thermally denatured human lung epithelial cells. Does not show any trans-sialidase activity since it is able to remove terminal sialic acid residues but is unable to catalyze their transfer to the acceptor substrate. 2-keto-3-deoxynononic acid (KDN) is the preferred substrate and A.fumigatus can utilize KDN as a sole carbon source. The chain is Exo-alpha-sialidase from Aspergillus fumigatus (strain ATCC MYA-4609 / CBS 101355 / FGSC A1100 / Af293) (Neosartorya fumigata).